The following is a 210-amino-acid chain: Putative 4-hydroxy-4-methyl-2-oxoglutarate aldolase (210 aa).

Substrate contacts are provided by residues 87–90 (GDFV) and Arg109. Asp110 contributes to the a divalent metal cation binding site.

The protein belongs to the class II aldolase/RraA-like family. Homotrimer. A divalent metal cation serves as cofactor.

It carries out the reaction 4-hydroxy-4-methyl-2-oxoglutarate = 2 pyruvate. The catalysed reaction is oxaloacetate + H(+) = pyruvate + CO2. Catalyzes the aldol cleavage of 4-hydroxy-4-methyl-2-oxoglutarate (HMG) into 2 molecules of pyruvate. Also contains a secondary oxaloacetate (OAA) decarboxylase activity due to the common pyruvate enolate transition state formed following C-C bond cleavage in the retro-aldol and decarboxylation reactions. In Halalkalibacterium halodurans (strain ATCC BAA-125 / DSM 18197 / FERM 7344 / JCM 9153 / C-125) (Bacillus halodurans), this protein is Putative 4-hydroxy-4-methyl-2-oxoglutarate aldolase.